The chain runs to 299 residues: Phosphoribosylaminoimidazole-succinocarboxamide synthase (299 aa).

It belongs to the SAICAR synthetase family.

The enzyme catalyses 5-amino-1-(5-phospho-D-ribosyl)imidazole-4-carboxylate + L-aspartate + ATP = (2S)-2-[5-amino-1-(5-phospho-beta-D-ribosyl)imidazole-4-carboxamido]succinate + ADP + phosphate + 2 H(+). Its pathway is purine metabolism; IMP biosynthesis via de novo pathway; 5-amino-1-(5-phospho-D-ribosyl)imidazole-4-carboxamide from 5-amino-1-(5-phospho-D-ribosyl)imidazole-4-carboxylate: step 1/2. The chain is Phosphoribosylaminoimidazole-succinocarboxamide synthase from Leifsonia xyli subsp. xyli (strain CTCB07).